The primary structure comprises 293 residues: 4-hydroxy-tetrahydrodipicolinate synthase (293 aa).

Threonine 45 serves as a coordination point for pyruvate. The active-site Proton donor/acceptor is tyrosine 133. Catalysis depends on lysine 161, which acts as the Schiff-base intermediate with substrate. A pyruvate-binding site is contributed by isoleucine 204.

This sequence belongs to the DapA family. Homotetramer; dimer of dimers.

It is found in the cytoplasm. The catalysed reaction is L-aspartate 4-semialdehyde + pyruvate = (2S,4S)-4-hydroxy-2,3,4,5-tetrahydrodipicolinate + H2O + H(+). It functions in the pathway amino-acid biosynthesis; L-lysine biosynthesis via DAP pathway; (S)-tetrahydrodipicolinate from L-aspartate: step 3/4. Functionally, catalyzes the condensation of (S)-aspartate-beta-semialdehyde [(S)-ASA] and pyruvate to 4-hydroxy-tetrahydrodipicolinate (HTPA). The polypeptide is 4-hydroxy-tetrahydrodipicolinate synthase (Yersinia pseudotuberculosis serotype O:1b (strain IP 31758)).